Reading from the N-terminus, the 262-residue chain is MLIIPAIDIKGGKCVRLTRGDFEQEKIYLDEPSDMAIIWRKQNAKLIHVVDLDAALTGKPENFDKIKQIVDTLDIPIEIGGGIRTAEDAARYLDIGVYRVVIGSAAVKNPSLVSQLIEKYGPRKIVVGIDAEDGIAKISGWTESSQKKDYELALEMKDRGVERIIYTDITRDGTLEGVGYETTKAFAEKAQMRITASGGVFGKQDLSKLCKLEHLGVDSVIIGKALYEERFPCQKLWHLFEESISLDTNFSTAEQKQNSVAG.

Catalysis depends on aspartate 8, which acts as the Proton acceptor. The active-site Proton donor is the aspartate 130.

The protein belongs to the HisA/HisF family.

The protein localises to the cytoplasm. The catalysed reaction is 1-(5-phospho-beta-D-ribosyl)-5-[(5-phospho-beta-D-ribosylamino)methylideneamino]imidazole-4-carboxamide = 5-[(5-phospho-1-deoxy-D-ribulos-1-ylimino)methylamino]-1-(5-phospho-beta-D-ribosyl)imidazole-4-carboxamide. Its pathway is amino-acid biosynthesis; L-histidine biosynthesis; L-histidine from 5-phospho-alpha-D-ribose 1-diphosphate: step 4/9. The protein is 1-(5-phosphoribosyl)-5-[(5-phosphoribosylamino)methylideneamino] imidazole-4-carboxamide isomerase of Chloroherpeton thalassium (strain ATCC 35110 / GB-78).